The following is a 61-amino-acid chain: Large ribosomal subunit protein uL30 (61 aa).

It belongs to the universal ribosomal protein uL30 family. In terms of assembly, part of the 50S ribosomal subunit.

The sequence is that of Large ribosomal subunit protein uL30 from Lactobacillus acidophilus (strain ATCC 700396 / NCK56 / N2 / NCFM).